Consider the following 287-residue polypeptide: Rhomboid-like protein 18 (287 aa).

A run of 6 helical transmembrane segments spans residues 10–30 (NAPV…FFGI), 53–73 (LIIS…LYLL), 90–110 (VFIF…LSLT), 117–137 (LLTS…FLDI), 145–165 (VLGV…QLLL), and 172–192 (IFTG…IFGI). The UBA domain occupies 244–284 (EPSEEAIATLVSMGFDQNAARQALVHARNDVNAATNILLEA).

This sequence belongs to the peptidase S54 family.

The protein localises to the membrane. In terms of biological role, probable rhomboid-type serine protease that catalyzes intramembrane proteolysis. This Arabidopsis thaliana (Mouse-ear cress) protein is Rhomboid-like protein 18.